The primary structure comprises 915 residues: Rab3 GTPase-activating protein catalytic subunit (915 aa).

The protein belongs to the Rab3-GAP catalytic subunit family. As to quaternary structure, the Rab3 GTPase-activating complex is a heterodimer composed of rbg-1 and rbg-2.

The protein resides in the cytoplasm. Probable catalytic subunit of a GTPase activating protein that has specificity for Rab3 subfamily. Rab3 proteins are involved in regulated exocytosis of neurotransmitters and hormones. Specifically converts active Rab3-GTP to the inactive form Rab3-GDP. The polypeptide is Rab3 GTPase-activating protein catalytic subunit (rbg-1) (Caenorhabditis elegans).